Here is a 230-residue protein sequence, read N- to C-terminus: Large ribosomal subunit protein uL1 (230 aa).

Belongs to the universal ribosomal protein uL1 family. As to quaternary structure, part of the 50S ribosomal subunit.

In terms of biological role, binds directly to 23S rRNA. The L1 stalk is quite mobile in the ribosome, and is involved in E site tRNA release. Protein L1 is also a translational repressor protein, it controls the translation of the L11 operon by binding to its mRNA. This is Large ribosomal subunit protein uL1 from Ruminiclostridium cellulolyticum (strain ATCC 35319 / DSM 5812 / JCM 6584 / H10) (Clostridium cellulolyticum).